The chain runs to 867 residues: Replication origin-binding protein (867 aa).

A disordered region spans residues 1–39 (MNVATCTHQTHHAARAPGATSAPGAASGDPLGARRPIGD). The segment covering 15 to 28 (RAPGATSAPGAASG) has biased composition (low complexity). One can recognise a Helicase ATP-binding domain in the interval 86–251 (ASAPTARCVT…CSLRGEKNVH (166 aa)). Position 99 to 106 (99 to 106 (APMGSGKT)) interacts with ATP.

The protein belongs to the herpesviridae OriBP family. In terms of assembly, homodimer. Interacts with the major DNA-binding protein ICP8. Interacts with the helicase/primase component UL8 and the polymerase accessory protein UL42.

It is found in the host nucleus. Functions as a docking protein to recruit essential components of the viral replication machinery to viral DNA origins. In the presence of the major DNA-binding protein, opens dsDNA leading to a conformational change in the origin that facilitates DNA unwinding and subsequent replication. The protein is Replication origin-binding protein of Human herpesvirus 2 (strain HG52) (HHV-2).